Reading from the N-terminus, the 548-residue chain is Chaperonin GroEL (548 aa).

ATP contacts are provided by residues 30-33 (TLGP), Lys-51, 87-91 (DGTTT), Gly-415, 479-481 (NAA), and Asp-495.

Belongs to the chaperonin (HSP60) family. As to quaternary structure, forms a cylinder of 14 subunits composed of two heptameric rings stacked back-to-back. Interacts with the co-chaperonin GroES.

It is found in the cytoplasm. The enzyme catalyses ATP + H2O + a folded polypeptide = ADP + phosphate + an unfolded polypeptide.. In terms of biological role, together with its co-chaperonin GroES, plays an essential role in assisting protein folding. The GroEL-GroES system forms a nano-cage that allows encapsulation of the non-native substrate proteins and provides a physical environment optimized to promote and accelerate protein folding. This is Chaperonin GroEL from Serratia proteamaculans (strain 568).